Here is a 361-residue protein sequence, read N- to C-terminus: Ribosomal RNA large subunit methyltransferase M (361 aa).

Residues Ser187, Cys220–Gly223, Asp239, Asp259, and Asp276 each bind S-adenosyl-L-methionine. Lys305 serves as the catalytic Proton acceptor.

It belongs to the class I-like SAM-binding methyltransferase superfamily. RNA methyltransferase RlmE family. RlmM subfamily. As to quaternary structure, monomer.

The protein localises to the cytoplasm. The catalysed reaction is cytidine(2498) in 23S rRNA + S-adenosyl-L-methionine = 2'-O-methylcytidine(2498) in 23S rRNA + S-adenosyl-L-homocysteine + H(+). Catalyzes the 2'-O-methylation at nucleotide C2498 in 23S rRNA. This chain is Ribosomal RNA large subunit methyltransferase M, found in Shewanella oneidensis (strain ATCC 700550 / JCM 31522 / CIP 106686 / LMG 19005 / NCIMB 14063 / MR-1).